An 822-amino-acid polypeptide reads, in one-letter code: Nucleolar complex protein 3 (822 aa).

3 disordered regions span residues Met1–Asp86, Ala106–Asp142, and Lys172–Asp199. Over residues Arg13–Pro23 the composition is skewed to basic residues. Over residues Lys35–Gln45 the composition is skewed to basic and acidic residues. Positions Ser41–Asn48 match the Nuclear localization signal motif. Positions Pro76 to Asp86 are enriched in acidic residues. Positions Thr116 to Ser126 are enriched in polar residues. The segment covering Glu181–Asp199 has biased composition (acidic residues). Ser187 bears the Phosphoserine mark. Position 193 is a phosphothreonine (Thr193). Position 198 is a phosphoserine (Ser198). Residues Lys445 to Thr509 adopt a coiled-coil conformation.

The protein belongs to the CBF/MAK21 family.

Its subcellular location is the nucleus. It is found in the nucleolus. The sequence is that of Nucleolar complex protein 3 from Drosophila melanogaster (Fruit fly).